Reading from the N-terminus, the 363-residue chain is Probable butyrate kinase (363 aa).

The protein belongs to the acetokinase family.

The protein localises to the cytoplasm. The enzyme catalyses butanoate + ATP = butanoyl phosphate + ADP. This chain is Probable butyrate kinase, found in Maridesulfovibrio salexigens (strain ATCC 14822 / DSM 2638 / NCIMB 8403 / VKM B-1763) (Desulfovibrio salexigens).